Here is a 356-residue protein sequence, read N- to C-terminus: GTPase Obg (356 aa).

Positions 2–160 constitute an Obg domain; the sequence is ESFVDEVAIE…KFLRLSLKLL (159 aa). In terms of domain architecture, OBG-type G spans 161-329; it reads ADVGIVGLPN…LLENMDEVFF (169 aa). GTP-binding positions include 167 to 174, 192 to 196, 215 to 218, 282 to 285, and 310 to 312; these read GLPNAGKS, FTTLS, DIPG, NKID, and SAD. Mg(2+)-binding residues include Ser174 and Thr194.

This sequence belongs to the TRAFAC class OBG-HflX-like GTPase superfamily. OBG GTPase family. Monomer. The cofactor is Mg(2+).

It is found in the cytoplasm. An essential GTPase which binds GTP, GDP and possibly (p)ppGpp with moderate affinity, with high nucleotide exchange rates and a fairly low GTP hydrolysis rate. Plays a role in control of the cell cycle, stress response, ribosome biogenesis and in those bacteria that undergo differentiation, in morphogenesis control. The polypeptide is GTPase Obg (Leptospira interrogans serogroup Icterohaemorrhagiae serovar copenhageni (strain Fiocruz L1-130)).